The sequence spans 708 residues: Polyribonucleotide nucleotidyltransferase (708 aa).

Positions 488 and 494 each coordinate Mg(2+). Positions proline 555 to isoleucine 614 constitute a KH domain. The S1 motif domain maps to glycine 624–lysine 692.

It belongs to the polyribonucleotide nucleotidyltransferase family. In terms of assembly, component of the RNA degradosome, which is a multiprotein complex involved in RNA processing and mRNA degradation. Requires Mg(2+) as cofactor.

It localises to the cytoplasm. It catalyses the reaction RNA(n+1) + phosphate = RNA(n) + a ribonucleoside 5'-diphosphate. Involved in mRNA degradation. Catalyzes the phosphorolysis of single-stranded polyribonucleotides processively in the 3'- to 5'-direction. This Pseudoalteromonas translucida (strain TAC 125) protein is Polyribonucleotide nucleotidyltransferase.